The sequence spans 1014 residues: MPESIIAGIPVHFPFEPYEVQRAFMEKVIMCLRDGTNGVLESPTGTGKTLSLLCSSLAWIRTRQSEHQINMQKLQMEQQQRQATGGSATGAISDLALTMGKANNWGVPKVIYASRTHSQLTQAMRELKRTAYASMRSVVLGSRDQLCIHPDVMKEQGNSNKVNMCKLKVHAKTCSFQLRVESKKDHPDFRGPSIMDIEDLVKVGQRLKMCPYYASKELVSSADITFMPYNYLLDPKARKANKIELSNTIVILDEAHNIEKICEESASVQIRSSDVAMAIEDVTHIMKIFTSADSQDSGGPEEPKDFTLDDLTLLKEMLLELEKAIDGVVVENQVEGTTYPAAHIYELLGKANFTYGNCATIVALLDKLVQYLMVASQHSMLRKGGSFMVLSDLLNVVFANKEDIMAKVHRSFKVHVQIEDTKQTKPAGNSNSKQTGWLGKGNNATSTVSKTAKIINFWCFNPGFGMEQLLNTQVRSVILTSGTLAPLKPLIAELAIPVAQHLENPHIVDQSQVYVKIIGTGPDREQLISNYKNRDNPKYISSLGQTILNVSRIVPDGLLVFFPSYPMLNQCVDAWQASGLWADLSSRKPIFLEPRGKDQFTSTMEEFYQAIRDSKGACFMAVCRGKVSEGLDFADRNGRAVIITGLPFPPLKDPKVILKRRYLETNRTKENQLLSGQEWYNLDATRAVNQAIGRVIRHRHDYGAILLCDARFQDASQVQQLSKWIRGHLGARPQSSPFGPIVRELRQFFKHAEQTMVQPDERVVEPPLQIVCKEEQPTLTPSYNSNTQIKREPGSGVNKFQLASELAAKAEMANSIKSWTPADYVNAAGCTNQSQTAPNAMDFMSRLNSNVTSIDFNNTDLVKIHKRERSSPTANESLTSGKKRFKLISSTDMVKTEPGTSNSCSYGNTSSSGSDSRCCSAKPAEYPLKEAPESRADFLREVRSVVDSDKFRSFGKALLAYKTGGDNCFEVLMVLLLDVLGAPKLRYLLHGMRRYLKNEHKEEFDIRLASLQAS.

The Helicase ATP-binding domain maps to 7 to 324 (AGIPVHFPFE…KEMLLELEKA (318 aa)). 42–49 (SPTGTGKT) contributes to the ATP binding site. [4Fe-4S] cluster-binding residues include Cys-147, Cys-165, Cys-174, and Cys-210. Residues 253-256 (DEAH) carry the DEAH box motif. Thr-873 carries the post-translational modification Phosphothreonine. Residues 891–917 (TDMVKTEPGTSNSCSYGNTSSSGSDSR) form a disordered region. The segment covering 899–917 (GTSNSCSYGNTSSSGSDSR) has biased composition (low complexity).

This sequence belongs to the helicase family. RAD3/XPD subfamily.

It is found in the nucleus. The catalysed reaction is ATP + H2O = ADP + phosphate + H(+). A probable ATP-dependent DNA helicase implicated in DNA repair and the maintenance of genomic stability. Acts as an anti-recombinase to counteract toxic recombination and limit crossover during meiosis. Regulates meiotic recombination and crossover homeostasis by physically dissociating strand invasion events and thereby promotes noncrossover repair by meiotic synthesis dependent strand annealing (SDSA) as well as disassembly of D loop recombination intermediates. The sequence is that of Regulator of telomere elongation helicase 1 homolog from Drosophila mojavensis (Fruit fly).